Here is a 222-residue protein sequence, read N- to C-terminus: Eukaryotic translation initiation factor 3 subunit K (222 aa).

One can recognise a PCI domain in the interval Tyr46–Lys208.

Belongs to the eIF-3 subunit K family. Component of the eukaryotic translation initiation factor 3 (eIF-3) complex. The eIF-3 complex interacts with pix.

The protein resides in the cytoplasm. Its function is as follows. Component of the eukaryotic translation initiation factor 3 (eIF-3) complex, which is involved in protein synthesis of a specialized repertoire of mRNAs and, together with other initiation factors, stimulates binding of mRNA and methionyl-tRNAi to the 40S ribosome. The eIF-3 complex specifically targets and initiates translation of a subset of mRNAs involved in cell proliferation. This Drosophila grimshawi (Hawaiian fruit fly) protein is Eukaryotic translation initiation factor 3 subunit K.